A 259-amino-acid chain; its full sequence is Large ribosomal subunit protein uL4 (259 aa).

Positions 47-67 are disordered; the sequence is WGTDPMAGKRTTAESFGSGRG.

The protein belongs to the universal ribosomal protein uL4 family. Part of the 50S ribosomal subunit.

Functionally, one of the primary rRNA binding proteins, this protein initially binds near the 5'-end of the 23S rRNA. It is important during the early stages of 50S assembly. It makes multiple contacts with different domains of the 23S rRNA in the assembled 50S subunit and ribosome. Forms part of the polypeptide exit tunnel. This Methanosphaera stadtmanae (strain ATCC 43021 / DSM 3091 / JCM 11832 / MCB-3) protein is Large ribosomal subunit protein uL4.